Reading from the N-terminus, the 297-residue chain is Phosphoribosylaminoimidazole-succinocarboxamide synthase (297 aa).

Belongs to the SAICAR synthetase family.

It carries out the reaction 5-amino-1-(5-phospho-D-ribosyl)imidazole-4-carboxylate + L-aspartate + ATP = (2S)-2-[5-amino-1-(5-phospho-beta-D-ribosyl)imidazole-4-carboxamido]succinate + ADP + phosphate + 2 H(+). It functions in the pathway purine metabolism; IMP biosynthesis via de novo pathway; 5-amino-1-(5-phospho-D-ribosyl)imidazole-4-carboxamide from 5-amino-1-(5-phospho-D-ribosyl)imidazole-4-carboxylate: step 1/2. This Corynebacterium glutamicum (strain ATCC 13032 / DSM 20300 / JCM 1318 / BCRC 11384 / CCUG 27702 / LMG 3730 / NBRC 12168 / NCIMB 10025 / NRRL B-2784 / 534) protein is Phosphoribosylaminoimidazole-succinocarboxamide synthase.